A 599-amino-acid polypeptide reads, in one-letter code: THO complex subunit 1 (599 aa).

Disordered stretches follow at residues 376–395 and 497–599; these read EKQP…RRQR and KYQA…MPVS. Basic and acidic residues predominate over residues 502–522; sequence PNEKAKRAKKEETKGGSHETE. The segment covering 575 to 585 has biased composition (acidic residues); that stretch reads QIEDGETEEAG.

As to quaternary structure, component of the THO complex, which is composed of THO1, THO2, THO3, THO5, THO6 and THO7.

The protein resides in the nucleus. Its function is as follows. Acts as a component of the THO subcomplex of the TREX complex which is thought to couple mRNA transcription, processing and nuclear export. Contributes to the integrity of the endogenous trans-acting small interfering RNA (ta-siRNA) pathway. May process or transport a long RNA molecule so that it can be a template for secondary siRNA production. May participate in the trafficking of siRNA precursors to the ARGONAUTE catalytic center. Required for the generation of functional messenger ribonucleoproteins (mRNPs). Plays an important roles in plant innate immunity. The sequence is that of THO complex subunit 1 (THO1) from Arabidopsis thaliana (Mouse-ear cress).